The chain runs to 214 residues: Galactokinase (214 aa).

Alpha-D-galactose contacts are provided by Arg47, Asp53, His54, and Asp56. ATP-binding residues include Gly149, Gly151, Ser153, and Ser154. Asp199 is a binding site for alpha-D-galactose. The active-site Proton acceptor is the Asp199.

Belongs to the GHMP kinase family. GalK subfamily.

The catalysed reaction is alpha-D-galactose + ATP = alpha-D-galactose 1-phosphate + ADP + H(+). The protein operates within carbohydrate metabolism; galactose metabolism. In terms of biological role, galactokinase is a key enzyme in the galactose metabolism where it catalyzes the conversion of alpha-D-galactose to galactose 1-phosphate. Can also induce the transcription of the gal genes in response to the organism being challenged with galactose as the sole source of carbon. The polypeptide is Galactokinase (Candida maltosa (Yeast)).